Reading from the N-terminus, the 208-residue chain is MMTISKALPNFFEYAEHQTSYALRDVILPKDLSLLVKWMHQPHIIPQWQLNKPELELAVYFERMLCDDHQHLYIVQIDGKDVGYLEIYEAKRDRLALYYDAKKDDLGWHVLLSEDAVGQGHFRAVMRMLSFLIFEHSNAEKVVGEPDQTMSVYEKIRADIALEPQGTIQLQEKTAMLYHCYREKFYQQCGHYYKTFKRKKADKCLVEN.

The protein belongs to the IucB family.

The enzyme catalyses N-hydroxyputrescine + acetyl-CoA = N(1)-acetyl-N(1)-hydroxyputrescine + CoA. Its pathway is siderophore biosynthesis. Its function is as follows. N-acetyltransferase involved in the biosynthesis of fimsbactin A, the major siderophore produced by A.baumannii. Catalyzes the acetylation of N-hydroxyputrescine to form N(1)-acetyl-N(1)-hydroxyputrescine (ahPutr). The protein is N-hydroxyputrescine acetyltransferase of Acinetobacter baumannii (strain ATCC 17978 / DSM 105126 / CIP 53.77 / LMG 1025 / NCDC KC755 / 5377).